A 70-amino-acid chain; its full sequence is uncharacterized protein (70 aa).

Residues 50–70 (INVVLVLIIALIIFILMLDGV) form a helical membrane-spanning segment.

The protein resides in the membrane. This is an uncharacterized protein from Dictyostelium discoideum (Social amoeba).